The sequence spans 151 residues: UPF0179 protein MJ1627 (151 aa).

Belongs to the UPF0179 family.

The sequence is that of UPF0179 protein MJ1627 from Methanocaldococcus jannaschii (strain ATCC 43067 / DSM 2661 / JAL-1 / JCM 10045 / NBRC 100440) (Methanococcus jannaschii).